The following is a 260-amino-acid chain: Sodium channel modifier 1 (260 aa).

The short motif at 4–20 (KRDGDDSSQLNVLKKRR) is the Bipartite nuclear localization signal element. The Matrin-type zinc-finger motif lies at 42-74 (YACTVCHHRPVFNTIDMLSVHRTGKKHLGGLQR). The disordered stretch occupies residues 143 to 260 (RNVYDPHSGP…EEEPPALPPS (118 aa)). The segment covering 166-187 (PGPSQPHTSLHSPPTGPCSSPT) has biased composition (polar residues). The span at 202–221 (KGEEKFRKEIADPERERNME) shows a compositional bias: basic and acidic residues. Acidic residues predominate over residues 245–254 (VEFDSDEEEP).

As to quaternary structure, component of the minor spliceosome, which splices U12-type introns.

Its subcellular location is the nucleus. The protein localises to the nucleoplasm. It localises to the nucleus speckle. In terms of biological role, as a component of the minor spliceosome, involved in the splicing of U12-type introns in pre-mRNAs. This Xenopus laevis (African clawed frog) protein is Sodium channel modifier 1 (scnm1).